We begin with the raw amino-acid sequence, 486 residues long: uncharacterized protein (486 aa).

ABC transporter domains lie at 2–241 (VEFK…KVFV) and 249–486 (FEKD…LLFL). ATP is bound at residue 36-43 (GKNGEGKS).

This sequence belongs to the ABC transporter superfamily.

This is an uncharacterized protein from Borreliella burgdorferi (strain ATCC 35210 / DSM 4680 / CIP 102532 / B31) (Borrelia burgdorferi).